A 503-amino-acid polypeptide reads, in one-letter code: Maturase K (503 aa).

This sequence belongs to the intron maturase 2 family. MatK subfamily.

The protein localises to the plastid. The protein resides in the chloroplast. Functionally, usually encoded in the trnK tRNA gene intron. Probably assists in splicing its own and other chloroplast group II introns. This chain is Maturase K, found in Diospyros virginiana (American persimmon).